We begin with the raw amino-acid sequence, 421 residues long: Proton extrusion protein PxcA (421 aa).

Residues 124-153 (PTVHSSNPDDSQLMTSKNNSKPVPDPESDD) are disordered. Residues 125 to 144 (TVHSSNPDDSQLMTSKNNSK) are compositionally biased toward polar residues. 4 helical membrane passes run 203-223 (FVLLLVLVPLLTQQISKSFIV), 298-318 (AIKNIFADLISAAAFAILLIS), 345-365 (IIILFTDIFVGFHSPHGWEVI), and 381-401 (FIFLFIATFPVILDTIFKYWI).

It belongs to the CemA family.

It is found in the cell inner membrane. Its function is as follows. Required for H(+) efflux immediately after light irradiation to form a rapid H(+) concentration gradient across the thylakoid membranes. Together with PxcL, contributes to transient H(+) uptake following dark to light transition. The protein is Proton extrusion protein PxcA of Synechococcus sp. (strain ATCC 27144 / PCC 6301 / SAUG 1402/1) (Anacystis nidulans).